Reading from the N-terminus, the 333-residue chain is Flotillin-like protein FloA (333 aa).

The chain crosses the membrane as a helical span at residues 9–29 (IVLIVGGIIFLILFFHYVPFF).

Belongs to the flotillin-like FloA family. Homooligomerizes.

It localises to the cell membrane. The protein resides in the membrane raft. Its function is as follows. Found in functional membrane microdomains (FMM) that may be equivalent to eukaryotic membrane rafts. FMMs are highly dynamic and increase in number as cells age. Flotillins are thought to be important factors in membrane fluidity. In Bacteroides thetaiotaomicron (strain ATCC 29148 / DSM 2079 / JCM 5827 / CCUG 10774 / NCTC 10582 / VPI-5482 / E50), this protein is Flotillin-like protein FloA.